We begin with the raw amino-acid sequence, 70 residues long: uncharacterized protein (70 aa).

This is an uncharacterized protein from Sinorhizobium fredii (strain NBRC 101917 / NGR234).